Consider the following 335-residue polypeptide: MIQFKDSYKHYGANGREVTALQPLNLEIRAGEVFGIIGHSGAGKSTMLRMINRLEEPSGGHLLINGQDITVLDRMGLRALRRQIGMIFQHFNLLSSYTVAGNVAFPLKLTGASDAKINARVAELLAWVGLEAHANTYPAQLSGGQKQRVGIARALATRPQILLCDEVTSALDPQTTSTVLQLLARINRELGLTIVLITHEMDVIRRICDRVAVLDTGRLVEIGLVTDVFLHPQHPTTRSFVMETEHIDTSALDQDFALVKGRIVRLTFIGTDTYLPLLGRVARETGVDYNILSGRIDRIKETPYGQLTVALSGGDPVAAQAAFAAAGIHIEELRA.

An ABC transporter domain is found at 2-241 (IQFKDSYKHY…PQHPTTRSFV (240 aa)). 38 to 45 (GHSGAGKS) is a binding site for ATP.

Belongs to the ABC transporter superfamily. Methionine importer (TC 3.A.1.24) family. The complex is composed of two ATP-binding proteins (MetN), two transmembrane proteins (MetI) and a solute-binding protein (MetQ).

The protein localises to the cell inner membrane. The enzyme catalyses L-methionine(out) + ATP + H2O = L-methionine(in) + ADP + phosphate + H(+). The catalysed reaction is D-methionine(out) + ATP + H2O = D-methionine(in) + ADP + phosphate + H(+). In terms of biological role, part of the ABC transporter complex MetNIQ involved in methionine import. Responsible for energy coupling to the transport system. The chain is Methionine import ATP-binding protein MetN from Xylella fastidiosa (strain Temecula1 / ATCC 700964).